We begin with the raw amino-acid sequence, 449 residues long: UDP-N-acetylmuramate--L-alanine ligase (449 aa).

ATP is bound at residue 113–119 (GSHGKTT).

It belongs to the MurCDEF family.

Its subcellular location is the cytoplasm. The catalysed reaction is UDP-N-acetyl-alpha-D-muramate + L-alanine + ATP = UDP-N-acetyl-alpha-D-muramoyl-L-alanine + ADP + phosphate + H(+). The protein operates within cell wall biogenesis; peptidoglycan biosynthesis. Its function is as follows. Cell wall formation. This Hydrogenobaculum sp. (strain Y04AAS1) protein is UDP-N-acetylmuramate--L-alanine ligase.